We begin with the raw amino-acid sequence, 232 residues long: 5'-methylthioadenosine/S-adenosylhomocysteine nucleosidase (232 aa).

Catalysis depends on glutamate 12, which acts as the Proton acceptor. Residues glycine 78, isoleucine 152, and 173 to 174 contribute to the substrate site; that span reads ME. Catalysis depends on aspartate 197, which acts as the Proton donor.

It belongs to the PNP/UDP phosphorylase family. MtnN subfamily. As to quaternary structure, homodimer.

The catalysed reaction is S-adenosyl-L-homocysteine + H2O = S-(5-deoxy-D-ribos-5-yl)-L-homocysteine + adenine. It catalyses the reaction S-methyl-5'-thioadenosine + H2O = 5-(methylsulfanyl)-D-ribose + adenine. It carries out the reaction 5'-deoxyadenosine + H2O = 5-deoxy-D-ribose + adenine. It participates in amino-acid biosynthesis; L-methionine biosynthesis via salvage pathway; S-methyl-5-thio-alpha-D-ribose 1-phosphate from S-methyl-5'-thioadenosine (hydrolase route): step 1/2. Catalyzes the irreversible cleavage of the glycosidic bond in both 5'-methylthioadenosine (MTA) and S-adenosylhomocysteine (SAH/AdoHcy) to adenine and the corresponding thioribose, 5'-methylthioribose and S-ribosylhomocysteine, respectively. Also cleaves 5'-deoxyadenosine, a toxic by-product of radical S-adenosylmethionine (SAM) enzymes, into 5-deoxyribose and adenine. Thus, is required for in vivo function of the radical SAM enzymes biotin synthase and lipoic acid synthase, that are inhibited by 5'-deoxyadenosine accumulation. The chain is 5'-methylthioadenosine/S-adenosylhomocysteine nucleosidase from Citrobacter koseri (strain ATCC BAA-895 / CDC 4225-83 / SGSC4696).